A 291-amino-acid chain; its full sequence is D-alanyl-D-alanine carboxypeptidase DacB2 (291 aa).

The N-terminal stretch at 1–22 (MRKLMTATAALCACAVTVSAGA) is a signal peptide. The Acyl-ester intermediate role is filled by serine 69. Lysine 72 acts as the Proton acceptor in catalysis. Serine 124 is an active-site residue.

This sequence belongs to the peptidase S11 family.

The protein localises to the periplasm. It participates in cell wall biogenesis; peptidoglycan biosynthesis. Inhibited by the beta-lactam antibiotic meropenem. Inhibited by the non-specific inhibitor phenylmethylsulfonyl fluoride (PMSF). Its function is as follows. Probably cleaves the terminal D-Ala-D-Ala dipeptide of the peptidoglycan stem peptide. Shows significant D,D-carboxypeptidase activity in vitro. Acts on the synthetic penta-peptide substrate Penta-DAP (L-Ala-gamma-D-Gln-DAP-D-Ala-D-Ala). Also shows weak activity on Penta-Lys (L-Ala-gamma-Glu-L-Lys-D-Ala-D-Ala). The catalytic domain binds weakly to peptidoglycan in vitro. Plays an important role in the maintenance of colony morphology and cell wall permeability and integrity. The sequence is that of D-alanyl-D-alanine carboxypeptidase DacB2 from Mycobacterium tuberculosis (strain ATCC 25618 / H37Rv).